The sequence spans 175 residues: Peptide deformylase (175 aa).

Residues C98 and H140 each coordinate Fe cation. E141 is an active-site residue. H144 serves as a coordination point for Fe cation.

This sequence belongs to the polypeptide deformylase family. The cofactor is Fe(2+).

It carries out the reaction N-terminal N-formyl-L-methionyl-[peptide] + H2O = N-terminal L-methionyl-[peptide] + formate. Removes the formyl group from the N-terminal Met of newly synthesized proteins. Requires at least a dipeptide for an efficient rate of reaction. N-terminal L-methionine is a prerequisite for activity but the enzyme has broad specificity at other positions. In Bradyrhizobium sp. (strain ORS 278), this protein is Peptide deformylase.